The primary structure comprises 117 residues: Large ribosomal subunit protein uL18 (117 aa).

This sequence belongs to the universal ribosomal protein uL18 family. As to quaternary structure, part of the 50S ribosomal subunit; part of the 5S rRNA/L5/L18/L25 subcomplex. Contacts the 5S and 23S rRNAs.

Its function is as follows. This is one of the proteins that bind and probably mediate the attachment of the 5S RNA into the large ribosomal subunit, where it forms part of the central protuberance. This Acidithiobacillus ferrooxidans (strain ATCC 23270 / DSM 14882 / CIP 104768 / NCIMB 8455) (Ferrobacillus ferrooxidans (strain ATCC 23270)) protein is Large ribosomal subunit protein uL18.